A 356-amino-acid chain; its full sequence is Chorismate synthase (356 aa).

Arg-46 contributes to the NADP(+) binding site. Residues 122–124, 234–235, Gly-274, 289–293, and Arg-315 each bind FMN; these read RSS, NG, and KPTPS.

Belongs to the chorismate synthase family. Homotetramer. Requires FMNH2 as cofactor.

The catalysed reaction is 5-O-(1-carboxyvinyl)-3-phosphoshikimate = chorismate + phosphate. Its pathway is metabolic intermediate biosynthesis; chorismate biosynthesis; chorismate from D-erythrose 4-phosphate and phosphoenolpyruvate: step 7/7. In terms of biological role, catalyzes the anti-1,4-elimination of the C-3 phosphate and the C-6 proR hydrogen from 5-enolpyruvylshikimate-3-phosphate (EPSP) to yield chorismate, which is the branch point compound that serves as the starting substrate for the three terminal pathways of aromatic amino acid biosynthesis. This reaction introduces a second double bond into the aromatic ring system. In Campylobacter fetus subsp. fetus (strain 82-40), this protein is Chorismate synthase.